The primary structure comprises 370 residues: DNA primase large subunit PriL (370 aa).

[4Fe-4S] cluster is bound by residues Cys230, Cys301, Cys310, and Cys317. The disordered stretch occupies residues 337–370; the sequence is EGEEAQGKEQGKEKDDGKEKENGKESEVKKKKEK.

This sequence belongs to the eukaryotic-type primase large subunit family. Heterodimer of a small subunit (PriS) and a large subunit (PriL). [4Fe-4S] cluster is required as a cofactor.

Regulatory subunit of DNA primase, an RNA polymerase that catalyzes the synthesis of short RNA molecules used as primers for DNA polymerase during DNA replication. Stabilizes and modulates the activity of the small subunit, increasing the rate of DNA synthesis, and conferring RNA synthesis capability. The DNA polymerase activity may enable DNA primase to also catalyze primer extension after primer synthesis. May also play a role in DNA repair. This chain is DNA primase large subunit PriL, found in Methanosarcina mazei (strain ATCC BAA-159 / DSM 3647 / Goe1 / Go1 / JCM 11833 / OCM 88) (Methanosarcina frisia).